The chain runs to 804 residues: Endoplasmin (804 aa).

The N-terminal stretch at 1 to 21 (MRALWVLGLCCVLLTFGSVRA) is a signal peptide. The SRT pseudosubstrate motif motif lies at 42–44 (SRT). Residue Asn-62 is glycosylated (N-linked (GlcNAc...) asparagine). Position 64 is a phosphoserine (Ser-64). Asn-107 is a glycosylation site (N-linked (GlcNAc...) asparagine). 3 residues coordinate ATP: Asn-107, Asp-149, and Asn-162. An N6-(2-hydroxyisobutyryl)lysine modification is found at Lys-168. Ser-172 is modified (phosphoserine). Position 199 (Phe-199) interacts with ATP. The N-linked (GlcNAc...) asparagine glycan is linked to Asn-217. The disordered stretch occupies residues 288–323 (TVEEPMEEEEAAKEEKEESDDEAAVEEEEEEKKPKT). Residues 289 to 317 (VEEPMEEEEAAKEEKEESDDEAAVEEEEE) are compositionally biased toward acidic residues. Residues Ser-306 and Ser-403 each carry the phosphoserine modification. Position 404 is an N6-succinyllysine (Lys-404). Asn-445 carries an N-linked (GlcNAc...) asparagine glycan. Position 447 is a phosphoserine (Ser-447). N6-acetyllysine is present on Lys-479. 2 N-linked (GlcNAc...) asparagine glycosylation sites follow: Asn-481 and Asn-502. Lys-633 carries the post-translational modification N6-succinyllysine. The disordered stretch occupies residues 750 to 804 (DPDAKVEDEPEEEPEETTEDTTEDTEQDEDEEMDVGTDEEEQETAKESTAEKDEL). Residues 757 to 791 (DEPEEEPEETTEDTTEDTEQDEDEEMDVGTDEEEQ) are compositionally biased toward acidic residues. Thr-786 carries the post-translational modification Phosphothreonine. Positions 792 to 804 (ETAKESTAEKDEL) are enriched in basic and acidic residues. The Prevents secretion from ER motif lies at 801-804 (KDEL).

Belongs to the heat shock protein 90 family. Homodimer; disulfide-linked. Component of an EIF2 complex at least composed of CELF1/CUGBP1, CALR, CALR3, EIF2S1, EIF2S2, HSP90B1 and HSPA5. Part of a large chaperone multiprotein complex comprising DNAJB11, HSP90B1, HSPA5, HYOU, PDIA2, PDIA4, PDIA6, PPIB, SDF2L1, UGGT1 and very small amounts of ERP29, but not, or at very low levels, CALR nor CANX. Interacts with AIMP1; regulates its retention in the endoplasmic reticulum. Hyperglycosylated form interacts with OS9; promoting its degradation by the endoplasmic reticulum associated degradation (ERAD). Interacts with CNPY3. This interaction is disrupted in the presence of ATP. Interacts with TLR4 and TLR9, but not with TLR3. Interacts with MZB1 in a calcium-dependent manner. Interacts with METTL23. Interacts with IL1B; the interaction facilitates cargo translocation into the ERGIC. Interacts with EIF2AK3. Phosphorylated by CK2. In terms of processing, N-glycosylated cotranslationally at Asn-217 by STT3A-containing OST-A complex: this glycosylation is constitutive. In response to various stress, 5 additional facultative sites (Asn-62, Asn-107, Asn-445, Asn-481 and Asn-502) can be glycosylated post-translationally by STT3B-containing OST-B complex, leading to a hyperglycosylated form that is degraded by the ER-associated degradation (ERAD) pathway. In normal conditions, the OST-A complex together with CCDC134 prevent glycosylation at facultative sites during protein folding, thereby preventing hyperglycosylation. Mechanistically, nascent HSP90B1 is tethered during translation to a specialized CCDC134-containing translocon that forms a microenvironment for its folding, in which STT3A associates with the SRT pseudosubstrate motif, and prevents access to facultative glycosylation sites until folding is completed, rendering its facultative sites inaccessible to the OST-B complex.

It localises to the endoplasmic reticulum lumen. It is found in the sarcoplasmic reticulum lumen. The protein localises to the melanosome. It catalyses the reaction ATP + H2O = ADP + phosphate + H(+). Functionally, ATP-dependent chaperone involved in the processing of proteins in the endoplasmic reticulum, regulating their transport. Together with MESD, acts as a modulator of the Wnt pathway by promoting the folding of LRP6, a coreceptor of the canonical Wnt pathway. When associated with CNPY3, required for proper folding of Toll-like receptors. Promotes folding and trafficking of TLR4 to the cell surface. May participate in the unfolding of cytosolic leaderless cargos (lacking the secretion signal sequence) such as the interleukin 1/IL-1 to facilitate their translocation into the ERGIC (endoplasmic reticulum-Golgi intermediate compartment) and secretion; the translocation process is mediated by the cargo receptor TMED10. This is Endoplasmin (HSP90B1) from Macaca fascicularis (Crab-eating macaque).